The chain runs to 187 residues: UPF0301 protein YqgE (187 aa).

Belongs to the UPF0301 (AlgH) family.

The chain is UPF0301 protein YqgE from Salmonella paratyphi B (strain ATCC BAA-1250 / SPB7).